A 504-amino-acid polypeptide reads, in one-letter code: Cytochrome P450 2D1 (504 aa).

Heme is bound at residue Cys446.

The protein belongs to the cytochrome P450 family. Heme is required as a cofactor.

The protein resides in the endoplasmic reticulum membrane. It is found in the microsome membrane. The catalysed reaction is an organic molecule + reduced [NADPH--hemoprotein reductase] + O2 = an alcohol + oxidized [NADPH--hemoprotein reductase] + H2O + H(+). Its function is as follows. Cytochromes P450 are a group of heme-thiolate monooxygenases. In liver microsomes, this enzyme is involved in an NADPH-dependent electron transport pathway. It oxidizes a variety of structurally unrelated compounds, including steroids, fatty acids, and xenobiotics. This chain is Cytochrome P450 2D1 (Cyp2d1), found in Rattus norvegicus (Rat).